A 156-amino-acid polypeptide reads, in one-letter code: Small ribosomal subunit protein uS7 (156 aa).

The protein belongs to the universal ribosomal protein uS7 family. Part of the 30S ribosomal subunit. Contacts proteins S9 and S11.

One of the primary rRNA binding proteins, it binds directly to 16S rRNA where it nucleates assembly of the head domain of the 30S subunit. Is located at the subunit interface close to the decoding center, probably blocks exit of the E-site tRNA. The protein is Small ribosomal subunit protein uS7 of Nocardioides sp. (strain ATCC BAA-499 / JS614).